The primary structure comprises 299 residues: Epimerase family protein SERP0438 (299 aa).

Belongs to the NAD(P)-dependent epimerase/dehydratase family. SDR39U1 subfamily.

The polypeptide is Epimerase family protein SERP0438 (Staphylococcus epidermidis (strain ATCC 35984 / DSM 28319 / BCRC 17069 / CCUG 31568 / BM 3577 / RP62A)).